The following is a 290-amino-acid chain: tRNA-cytidine(32) 2-sulfurtransferase (290 aa).

The PP-loop motif signature appears at 36-41 (SGGKDS). [4Fe-4S] cluster-binding residues include cysteine 111, cysteine 114, and cysteine 202. The disordered stretch occupies residues 259 to 290 (DPWLDAEDEEAEDCGEPAGDGVVSLGGARGGR). The span at 262–273 (LDAEDEEAEDCG) shows a compositional bias: acidic residues.

It belongs to the TtcA family. As to quaternary structure, homodimer. The cofactor is Mg(2+). [4Fe-4S] cluster is required as a cofactor.

It localises to the cytoplasm. It catalyses the reaction cytidine(32) in tRNA + S-sulfanyl-L-cysteinyl-[cysteine desulfurase] + AH2 + ATP = 2-thiocytidine(32) in tRNA + L-cysteinyl-[cysteine desulfurase] + A + AMP + diphosphate + H(+). The protein operates within tRNA modification. In terms of biological role, catalyzes the ATP-dependent 2-thiolation of cytidine in position 32 of tRNA, to form 2-thiocytidine (s(2)C32). The sulfur atoms are provided by the cysteine/cysteine desulfurase (IscS) system. This chain is tRNA-cytidine(32) 2-sulfurtransferase, found in Anaeromyxobacter dehalogenans (strain 2CP-C).